Consider the following 417-residue polypeptide: Serine hydroxymethyltransferase (417 aa).

Residues leucine 121 and 125–127 (GHL) each bind (6S)-5,6,7,8-tetrahydrofolate. Lysine 229 is subject to N6-(pyridoxal phosphate)lysine. 355-357 (SSF) is a (6S)-5,6,7,8-tetrahydrofolate binding site.

Belongs to the SHMT family. Homodimer. Pyridoxal 5'-phosphate serves as cofactor.

It is found in the cytoplasm. The catalysed reaction is (6R)-5,10-methylene-5,6,7,8-tetrahydrofolate + glycine + H2O = (6S)-5,6,7,8-tetrahydrofolate + L-serine. It participates in one-carbon metabolism; tetrahydrofolate interconversion. Its pathway is amino-acid biosynthesis; glycine biosynthesis; glycine from L-serine: step 1/1. Catalyzes the reversible interconversion of serine and glycine with tetrahydrofolate (THF) serving as the one-carbon carrier. This reaction serves as the major source of one-carbon groups required for the biosynthesis of purines, thymidylate, methionine, and other important biomolecules. Also exhibits THF-independent aldolase activity toward beta-hydroxyamino acids, producing glycine and aldehydes, via a retro-aldol mechanism. In Baumannia cicadellinicola subsp. Homalodisca coagulata, this protein is Serine hydroxymethyltransferase.